We begin with the raw amino-acid sequence, 337 residues long: MTKTLRVAVIGAGRMGADHIKRLSTRIHGAEVAAVVDVDLARAQAAIEGIDRAVALASADEALNNGDVNAVLIATPGFLHEEILYKALEKDFPILCEKPLTPDAGSAWKVVQAEQALGHKRIQVGFMRRFDAEYSALGAIIRNSELGELLMLHHQHRNPSTPEGFTNEMLINDSVVHEFDAIRFFTGEEITSVQVRLGKPTRSAPSGQHDPQHVLLETESGVLADVEIYVNAKFGYQVATQASFEEGIVSIGSDNGPYVQTAGKWGGNVTPGFEERFGAAYDVEVQAWVDAALRGEIGGPTAWDGYATAACCEAGVEAQKSGEKVKVQLNTKPDLYK.

The protein belongs to the Gfo/Idh/MocA family. As to quaternary structure, homotetramer.

It carries out the reaction myo-inositol + NAD(+) = scyllo-inosose + NADH + H(+). Involved in the oxidation of myo-inositol (MI) to 2-keto-myo-inositol (2KMI or 2-inosose). This chain is Inositol 2-dehydrogenase 1, found in Paenarthrobacter aurescens (strain TC1).